A 55-amino-acid polypeptide reads, in one-letter code: Large ribosomal subunit protein bL33 (55 aa).

Belongs to the bacterial ribosomal protein bL33 family.

In Baumannia cicadellinicola subsp. Homalodisca coagulata, this protein is Large ribosomal subunit protein bL33.